A 276-amino-acid chain; its full sequence is Src-like-adapter (276 aa).

The N-myristoyl glycine moiety is linked to residue Gly-2. The SH3 domain occupies 22-82 (LDSDFLAVLS…PGICVARVYH (61 aa)). The 92-residue stretch at 84–175 (WLFEGLGRDK…GLCCVLTTPC (92 aa)) folds into the SH2 domain. The segment at 212–276 (EGTENPLGVD…FFSSPPYFED (65 aa)) is SLA C-terminal. At Ser-253 the chain carries Phosphoserine. Tyr-273 carries the post-translational modification Phosphotyrosine.

In terms of assembly, interacts with EPHA2, VAV1, LCP2 and PDGFRB. Homodimer. Homodimerization and interaction with phosphorylated CBL occurs via its C-terminal domain. Interacts with phosphorylated proteins ZAP70, CD3Z, SYK and LAT via its SH2 domain. Expressed in lung and fetal brain. Weakly expressed in heart, adult brain, placenta, liver, skeletal muscle, kidney and pancreas.

The protein resides in the cytoplasm. Its subcellular location is the endosome. Its function is as follows. Adapter protein, which negatively regulates T-cell receptor (TCR) signaling. Inhibits T-cell antigen-receptor induced activation of nuclear factor of activated T-cells. Involved in the negative regulation of positive selection and mitosis of T-cells. May act by linking signaling proteins such as ZAP70 with CBL, leading to a CBL dependent degradation of signaling proteins. This chain is Src-like-adapter (SLA), found in Homo sapiens (Human).